The chain runs to 451 residues: Trigger factor (451 aa).

Residues 165–250 form the PPIase FKBP-type domain; it reads DDKLTIDFEG…LHQIQVREAL (86 aa).

Belongs to the FKBP-type PPIase family. Tig subfamily.

The protein resides in the cytoplasm. The enzyme catalyses [protein]-peptidylproline (omega=180) = [protein]-peptidylproline (omega=0). Its function is as follows. Involved in protein export. Acts as a chaperone by maintaining the newly synthesized protein in an open conformation. Functions as a peptidyl-prolyl cis-trans isomerase. This Helicobacter pylori (strain P12) protein is Trigger factor.